The following is a 407-amino-acid chain: Argininosuccinate synthase (407 aa).

ATP is bound by residues 16 to 24 and alanine 44; that span reads AYSGGLDTS. Positions 96 and 101 each coordinate L-citrulline. Glycine 126 contacts ATP. 3 residues coordinate L-aspartate: threonine 128, asparagine 132, and aspartate 133. Residue asparagine 132 coordinates L-citrulline. The L-citrulline site is built by arginine 136, serine 185, serine 194, glutamate 270, and tyrosine 282.

It belongs to the argininosuccinate synthase family. Type 1 subfamily. In terms of assembly, homotetramer.

Its subcellular location is the cytoplasm. It catalyses the reaction L-citrulline + L-aspartate + ATP = 2-(N(omega)-L-arginino)succinate + AMP + diphosphate + H(+). It participates in amino-acid biosynthesis; L-arginine biosynthesis; L-arginine from L-ornithine and carbamoyl phosphate: step 2/3. The sequence is that of Argininosuccinate synthase from Shewanella oneidensis (strain ATCC 700550 / JCM 31522 / CIP 106686 / LMG 19005 / NCIMB 14063 / MR-1).